The primary structure comprises 651 residues: Histone-arginine methyltransferase CARM1 (651 aa).

An interaction with C9orf72 region spans residues 28 to 139 (ATVSVFPGAR…GHTLERSVFS (112 aa)). One can recognise an SAM-dependent MTase PRMT-type domain in the interval 147 to 454 (AVQYFQFYGY…KRQSYDISIV (308 aa)). S-adenosyl-L-methionine-binding residues include Q160, R169, G193, and E215. At S217 the chain carries Phosphoserine. K228 is covalently cross-linked (Glycyl lysine isopeptide (Lys-Gly) (interchain with G-Cter in ubiquitin)). E244 and S272 together coordinate S-adenosyl-L-methionine. Residues 347 to 380 (RILMAKSVKYTVNFLEAKEGDLHRIEIPFKFHML) are required for nuclear translocation. A transactivation domain region spans residues 500-651 (TGSTYNLSSG…IPTNTMHYGS (152 aa)). R551 is modified (dimethylated arginine). Residues 581–617 (RSSYQWGPGRLRGHAGSSVPMTCPTGSSGAQGGGGSS) are disordered.

The protein belongs to the class I-like SAM-binding methyltransferase superfamily. Protein arginine N-methyltransferase family. As to quaternary structure, homodimer. Interacts with NR1H4. Interacts with SNRPC. Interacts with the C-terminus of NCOA2/GRIP1, NCO3/ACTR and NCOA1/SRC1. Part of a complex consisting of CARM1, EP300/P300 and NCOA2/GRIP1. Interacts with FLII, TP53, myogenic factor MEF2, EP300/P300, TRIM24, CREBBP and CTNNB1. Interacts with RELA. Identified in a complex containing CARM1, TRIM24 and NCOA2/GRIP1. Interacts with NCOA3/SRC3. Interacts with SKP2. Interacts (via PH domain-like fold) with C9orf72. Interacts with PARP1; promoting PARP1 recruimtent to replication forks. Auto-methylated on Arg-551. Methylation enhances transcription coactivator activity. Methylation is required for its role in the regulation of pre-mRNA alternative splicing. In terms of processing, phosphorylation at Ser-217 interferes with S-adenosyl-L-methionine binding and strongly reduces methyltransferase activity. Phosphorylation at Ser-217 is strongly increased during mitosis, and decreases rapidly to a very low, basal level after entry into the G1 phase of the cell cycle. Phosphorylation at Ser-217 may promote location in the cytosol. Post-translationally, ubiquitinated by E3 ubiquitin-protein ligase complex containing FBXO9 at Lys-228; leading to proteasomal degradation. As to expression, isoform 1 is expressed at low levels in brain, liver and testis. In terms of tissue distribution, isoform 2 is highly expressed in brain, liver, skeletal muscle and testis. Isoform 3 is highly expressed in spleen, liver and kidney. As to expression, isoform 4 is expressed in spleen, liver and kidney.

Its subcellular location is the nucleus. It is found in the cytoplasm. The protein localises to the chromosome. It carries out the reaction L-arginyl-[protein] + 2 S-adenosyl-L-methionine = N(omega),N(omega)-dimethyl-L-arginyl-[protein] + 2 S-adenosyl-L-homocysteine + 2 H(+). With respect to regulation, methylation of H3R17 (H3R17me) by CARM1 is stimulated by preacetylation of H3 'Lys-18' (H3K18ac) H3 'Lys-23' (H3K23ac) by EP300 and blocked by citrullination of H3 'Arg-17' (H3R17ci) by PADI4. Methylates (mono- and asymmetric dimethylation) the guanidino nitrogens of arginyl residues in several proteins involved in DNA packaging, transcription regulation, pre-mRNA splicing, and mRNA stability. Recruited to promoters upon gene activation together with histone acetyltransferases from EP300/P300 and p160 families, methylates histone H3 at 'Arg-17' (H3R17me), forming mainly asymmetric dimethylarginine (H3R17me2a), leading to activation of transcription via chromatin remodeling. During nuclear hormone receptor activation and TCF7L2/TCF4 activation, acts synergically with EP300/P300 and either one of the p160 histone acetyltransferases NCOA1/SRC1, NCOA2/GRIP1 and NCOA3/ACTR or CTNNB1/beta-catenin to activate transcription. During myogenic transcriptional activation, acts together with NCOA3/ACTR as a coactivator for MEF2C. During monocyte inflammatory stimulation, acts together with EP300/P300 as a coactivator for NF-kappa-B. Acts as a coactivator for PPARG, promotes adipocyte differentiation and the accumulation of brown fat tissue. Plays a role in the regulation of pre-mRNA alternative splicing by methylation of splicing factors. Also seems to be involved in p53/TP53 transcriptional activation. Methylates EP300/P300, both at 'Arg-2142', which may loosen its interaction with NCOA2/GRIP1, and at 'Arg-580' and 'Arg-604' in the KIX domain, which impairs its interaction with CREB and inhibits CREB-dependent transcriptional activation. Also methylates arginine residues in RNA-binding proteins PABPC1, ELAVL1 and ELAV4, which may affect their mRNA-stabilizing properties and the half-life of their target mRNAs. Acts as a transcriptional coactivator of ACACA/acetyl-CoA carboxylase by enriching H3R17 methylation at its promoter, thereby positively regulating fatty acid synthesis. Independently of its methyltransferase activity, involved in replication fork progression: promotes PARP1 recruitment to replication forks, leading to poly-ADP-ribosylation of chromatin at replication forks and reduced fork speed. Functionally, isoform 3 specifically affects pre-mRNA splicing. This activity is independent from methyltransferase activity. In Rattus norvegicus (Rat), this protein is Histone-arginine methyltransferase CARM1 (Carm1).